We begin with the raw amino-acid sequence, 442 residues long: MVVSRDKAPSAQETFLQMAQAAGLRGRLLITIGLLILVRVGIFIPVPDIDRQAFSQAINDNSVIGFLNIFTGGGLSTVGIFALGILPYINASIIMQLLTAAIPALEDLQKNEGEAGRRKISQYSRYIAFGWCIIQGLGLTVGLLRPYANNYGPLFIFQTVLAITAGSMFVMWISELITERGIGNGASLLIFVNIVATLPQTLGQTIEYAQSGGRQSITAVVLLMLVFLVMIVGIVFVQEGTRRIPIISARRQVGKKLYRERTSYLPLRLNQGGVMPIIFASAVLILPSSLAGFATGNEGLGGFGEIFVQISNALRPGTWVYTVVYSVMIFFFSYFYASLIVNPEDVSKNLKKMGSSIPGIRPGKKTEQYLEGVLNRLTFLGAIFLSFVATLPIFVEQATGVTTFQGLGATSLLILVGVAIDTAKQIQTYVISQRYEGMIKQP.

The next 10 membrane-spanning stretches (helical) occupy residues 29 to 49, 69 to 89, 126 to 146, 153 to 173, 182 to 202, 217 to 237, 274 to 294, 320 to 340, 377 to 397, and 400 to 420; these read LITIGLLILVRVGIFIPVPDI, IFTGGGLSTVGIFALGILPYI, YIAFGWCIIQGLGLTVGLLRP, PLFIFQTVLAITAGSMFVMWI, IGNGASLLIFVNIVATLPQTL, ITAVVLLMLVFLVMIVGIVFV, VMPIIFASAVLILPSSLAGFA, VYTVVYSVMIFFFSYFYASLI, LTFLGAIFLSFVATLPIFVEQ, and GVTTFQGLGATSLLILVGVAI.

It belongs to the SecY/SEC61-alpha family. Component of the Sec protein translocase complex. Heterotrimer consisting of SecY, SecE and SecG subunits. The heterotrimers can form oligomers, although 1 heterotrimer is thought to be able to translocate proteins. Interacts with the ribosome. Interacts with SecDF, and other proteins may be involved. Interacts with SecA.

It is found in the cell inner membrane. The protein resides in the cellular thylakoid membrane. In terms of biological role, the central subunit of the protein translocation channel SecYEG. Consists of two halves formed by TMs 1-5 and 6-10. These two domains form a lateral gate at the front which open onto the bilayer between TMs 2 and 7, and are clamped together by SecE at the back. The channel is closed by both a pore ring composed of hydrophobic SecY resides and a short helix (helix 2A) on the extracellular side of the membrane which forms a plug. The plug probably moves laterally to allow the channel to open. The ring and the pore may move independently. This is Protein translocase subunit SecY from Synechocystis sp. (strain ATCC 27184 / PCC 6803 / Kazusa).